A 1152-amino-acid chain; its full sequence is Syntaxin-binding protein 5 (1152 aa).

The interval 14-35 is disordered; sequence TAGSSSASQQQQQQQHPPGNRE. Over residues 17–28 the composition is skewed to low complexity; the sequence is SSSASQQQQQQQ. 10 WD repeats span residues 62–95, 102–141, 146–182, 201–235, 241–273, 295–337, 345–379, 401–478, 506–620, and 634–696; these read SALA…CYCQ, VIQL…SLKF, VTFC…GYVI, HISD…DYRY, IHSV…PTKP, PILK…KSTA, IVDF…LIDL, TCCE…YKLK, QIIS…ELVI, and TSLA…SGAG. Disordered regions lie at residues 557-596 and 675-731; these read TPEG…GLRD and SNDP…QKVN. Position 693 is a phosphoserine (serine 693). The span at 713–722 shows a compositional bias: low complexity; it reads SPTSGSSSPH. Position 724 is a phosphoserine; by PKA (serine 724). Serine 760 carries the phosphoserine modification. The residue at position 763 (threonine 763) is a Phosphothreonine. The residue at position 783 (serine 783) is a Phosphoserine. Threonine 785 carries the phosphothreonine modification. Serine 786 carries the post-translational modification Phosphoserine. WD repeat units follow at residues 795–852, 861–935, 940–984, and 998–1021; these read ISAL…SGTI, RMAF…QNCA, ITET…LDVY, and CFAN…TYSQ. Residues 879-893 show a composition bias toward basic and acidic residues; it reads WTEHNVPEEKDEKEK. The interval 879–907 is disordered; it reads WTEHNVPEEKDEKEKLKKRRPVSVSPSSS. Phosphoserine is present on residues serine 901 and serine 903. The residue at position 1040 (threonine 1040) is a Phosphothreonine. A phosphoserine mark is found at serine 1059 and serine 1132. A v-SNARE coiled-coil homology domain is found at 1087 to 1147; the sequence is GIEGVKGAAS…HEMMLKYKDK (61 aa).

It belongs to the WD repeat L(2)GL family. As to quaternary structure, part of a complex that contains STXBP5, STX4A and SNAP23. Interacts with STX1A and STX4A via its v-SNARE homology domain. Part of a complex that contains STX1, STXBP5, SNAP25 and SYT1. Phosphorylation by PKA reduces interaction with STX1A and enhances synaptic neurotransmitter release. As to expression, isoform 1 is detected in heart, brain, lung, liver, skeletal muscle, kidney and testis. Isoform 2 is detected in brain and in testis. Isoform 3 is detected in testis.

The protein localises to the cytoplasm. The protein resides in the cell membrane. It localises to the cytoplasmic vesicle membrane. It is found in the synapse. Its subcellular location is the cytoplasmic vesicle. The protein localises to the secretory vesicle. The protein resides in the synaptic vesicle. In terms of biological role, inhibits translocation of GLUT4 from intracellular vesicles to the plasma membrane. Plays a regulatory role in calcium-dependent exocytosis and neurotransmitter release. Inhibits membrane fusion between transport vesicles and the plasma membrane. May modulate the assembly of trans-SNARE complexes between transport vesicles and the plasma membrane. Competes with STXBP1 for STX1 binding. The polypeptide is Syntaxin-binding protein 5 (Stxbp5) (Rattus norvegicus (Rat)).